A 447-amino-acid polypeptide reads, in one-letter code: UDP-N-acetylmuramate--L-alanine ligase (447 aa).

Residue 107-113 (GTHGKTT) participates in ATP binding.

It belongs to the MurCDEF family.

The protein resides in the cytoplasm. The catalysed reaction is UDP-N-acetyl-alpha-D-muramate + L-alanine + ATP = UDP-N-acetyl-alpha-D-muramoyl-L-alanine + ADP + phosphate + H(+). Its pathway is cell wall biogenesis; peptidoglycan biosynthesis. Cell wall formation. This chain is UDP-N-acetylmuramate--L-alanine ligase, found in Rubrobacter xylanophilus (strain DSM 9941 / JCM 11954 / NBRC 16129 / PRD-1).